Here is a 130-residue protein sequence, read N- to C-terminus: Capsid protein (130 aa).

The segment at 31-104 (EWLSNNSRSQ…FAATDDVTVI (74 aa)) is viral RNA-binding.

It belongs to the Leviviricetes capsid protein family. As to quaternary structure, homodimer. The capsid proteins form dimers that assemble by group of 5. Twelve such pentamers are linked together with free dimers. The homodimers binds to the viral RNA via an operator hairpin, but also to many other RNA sequences in the viral genome; this interaction probably shifts the virus from the replicative to the assembly phase and ensures specific encapsidation of the viral genome.

The protein resides in the virion. Capsid protein self-assembles to form an icosahedral capsid with a T=3 symmetry, about 26 nm in diameter, and consisting of 89 capsid proteins dimers (178 capsid proteins). Involved in viral genome encapsidation through the interaction between a capsid protein dimer and the multiple packaging signals present in the RNA genome. The capsid also contains 1 copy of the A2 maturation protein. Functionally, acts as a translational repressor of viral replicase synthesis late in infection. This latter function is the result of capsid protein interaction with an RNA hairpin which contains the replicase ribosome-binding site. The polypeptide is Capsid protein (Escherichia coli (Bacteriophage JP34)).